Here is a 498-residue protein sequence, read N- to C-terminus: Cytochrome P450 71B31 (498 aa).

The helical transmembrane segment at 3-23 threads the bilayer; the sequence is MFLGLLFLFPLFFILFKNLLP. Position 441 (Cys441) interacts with heme.

Belongs to the cytochrome P450 family. Heme is required as a cofactor.

The protein localises to the membrane. The chain is Cytochrome P450 71B31 (CYP71B31) from Arabidopsis thaliana (Mouse-ear cress).